A 521-amino-acid chain; its full sequence is UDP-N-acetylmuramoyl-L-alanyl-D-glutamate--2,6-diaminopimelate ligase (521 aa).

S33 provides a ligand contact to UDP-N-acetyl-alpha-D-muramoyl-L-alanyl-D-glutamate. 116–122 (GTNGKTT) lines the ATP pocket. UDP-N-acetyl-alpha-D-muramoyl-L-alanyl-D-glutamate contacts are provided by residues 158-159 (TT), S185, Q191, and R193. K225 is subject to N6-carboxylysine. Residues R409, 433 to 436 (DNPR), G483, and E487 contribute to the meso-2,6-diaminopimelate site. Residues 433–436 (DNPR) carry the Meso-diaminopimelate recognition motif motif.

This sequence belongs to the MurCDEF family. MurE subfamily. Mg(2+) serves as cofactor. In terms of processing, carboxylation is probably crucial for Mg(2+) binding and, consequently, for the gamma-phosphate positioning of ATP.

It localises to the cytoplasm. It carries out the reaction UDP-N-acetyl-alpha-D-muramoyl-L-alanyl-D-glutamate + meso-2,6-diaminopimelate + ATP = UDP-N-acetyl-alpha-D-muramoyl-L-alanyl-gamma-D-glutamyl-meso-2,6-diaminopimelate + ADP + phosphate + H(+). The protein operates within cell wall biogenesis; peptidoglycan biosynthesis. In terms of biological role, catalyzes the addition of meso-diaminopimelic acid to the nucleotide precursor UDP-N-acetylmuramoyl-L-alanyl-D-glutamate (UMAG) in the biosynthesis of bacterial cell-wall peptidoglycan. The protein is UDP-N-acetylmuramoyl-L-alanyl-D-glutamate--2,6-diaminopimelate ligase of Nitrosomonas europaea (strain ATCC 19718 / CIP 103999 / KCTC 2705 / NBRC 14298).